A 543-amino-acid chain; its full sequence is Carboxypeptidase Y homolog A (543 aa).

A signal peptide spans 1 to 17 (MKVATSALLVGAVSASV). A propeptide spanning residues 18 to 128 (GPQQQVLKFP…KLENYSMRTK (111 aa)) is cleaved from the precursor. Asparagine 122 and asparagine 213 each carry an N-linked (GlcNAc...) asparagine glycan. 5 disulfide bridges follow: cysteine 182/cysteine 421, cysteine 316/cysteine 330, cysteine 340/cysteine 363, cysteine 347/cysteine 356, and cysteine 385/cysteine 391. Serine 269 is a catalytic residue. Aspartate 460 is a catalytic residue. Asparagine 508 carries N-linked (GlcNAc...) asparagine glycosylation. Histidine 519 is an active-site residue.

It belongs to the peptidase S10 family.

The protein resides in the vacuole. The enzyme catalyses Release of a C-terminal amino acid with broad specificity.. In terms of biological role, vacuolar carboxypeptidase involved in degradation of small peptides. Digests preferentially peptides containing an aliphatic or hydrophobic residue in P1' position, as well as methionine, leucine or phenylalanine in P1 position of ester substrate. The protein is Carboxypeptidase Y homolog A (CPYA) of Leptosphaeria maculans (strain JN3 / isolate v23.1.3 / race Av1-4-5-6-7-8) (Blackleg fungus).